The following is a 258-amino-acid chain: Thiamine thiazole synthase (258 aa).

Residues alanine 36, 55 to 56, glycine 63, valine 127, and 154 to 156 contribute to the NAD(+) site; these read EK and HVD. The Fe cation site is built by aspartate 156 and histidine 171. Methionine 224 contributes to the NAD(+) binding site. Arginine 234 contributes to the glycine binding site.

This sequence belongs to the THI4 family. As to quaternary structure, homooctamer; tetramer of dimers. Fe(2+) is required as a cofactor.

It catalyses the reaction hydrogen sulfide + glycine + NAD(+) = ADP-5-ethyl-4-methylthiazole-2-carboxylate + nicotinamide + 3 H2O + H(+). It functions in the pathway cofactor biosynthesis; thiamine diphosphate biosynthesis. In terms of biological role, involved in the biosynthesis of the thiazole moiety of thiamine. Catalyzes the conversion of NAD and glycine to adenosine diphosphate 5-(2-hydroxyethyl)-4-methylthiazole-2-carboxylate (ADT), an adenylated thiazole intermediate, using free sulfide as a source of sulfur. The protein is Thiamine thiazole synthase of Methanococcoides burtonii (strain DSM 6242 / NBRC 107633 / OCM 468 / ACE-M).